The sequence spans 193 residues: Transcriptional regulator RamR (193 aa).

Residues 7 to 66 (EDKKQALLEAATQAIAQSGIAASTAVIARNAGVAEGTLFRYFATKDELINTLYLHLKQDL) enclose the HTH tetR-type domain. Residues 29–48 (STAVIARNAGVAEGTLFRYF) constitute a DNA-binding region (H-T-H motif).

In terms of assembly, homodimer. May bind DNA either as a homodimer or as a pair of homodimers. Various chemicals reduce DNA-binding in vitro, including bile acids, such as cholic and chenodeoxycholic acids, and antimicrobial drugs, such as berberine, crystal violet, dequalinium, ethidium bromide and rhodamine 6G. Binds small regulatory RNA StyR3.

Functionally, transcriptional regulator. Represses the transcription of the transcriptional activator RamA and, thereby, leads to repression of the expression of the efflux pump subunits AcrA and AcrB, and TolC. Acts by binding directly to the promoter region of the ramA gene. Promoter binding may be inhibited partially by the small regulatory RNA StyR3, perhaps thereby ensuring a basal level of expression of RamA. This Salmonella typhimurium (strain LT2 / SGSC1412 / ATCC 700720) protein is Transcriptional regulator RamR.